The primary structure comprises 637 residues: MEFGKRYKAKDYDVIVVGAGHAGCEAALASARMGNETLLITINLEMVAFMPCNPSIGGPAKGIVVREIDAMGGEMGRNIDKTYVQMRMLNTGKGPAVRALRAQADKRQYSIEMKHTIEQTPHLTLRQGIVDDLIIEDGEVKGVVTNTGACYGAKSVVLTTGTAARGKIIIGELMYSSGPNNTQPALELSKNLAKLGFELKRFKTGTPPRVDGNTIDYDKTEEQPGDVEPNHFSYESKDEDYLKVKDQLSCWLTYTNEYTHKIIQDNLDRAPMFTGVIEGVGPRYCPSIEDKIVRFSDKPRHQLFLEPEGRNTDEYYVQGLSTSLPEEVQQEMVRSIDGLEHAEMMRPGYAIEYDVVSPYQLRPTLETKLIKGLYTAGQTNGTSGYEEAAGQGFIAGVNAGRRAKGLEEITLKRSDAYIGVMIDDLVTKGTNEPYRLLTSRAEYRLILRHDNADLRLTELGHEIGLISDERYAAFEEKKAQIEAEKQRLSKIRIKPNAEVNAFVEAHGDRELKDGVLATEFLRRPYVTYQDLLKFIPAPAEPLDRRVIEQIEIQFKYEGYIKKEYAKVEKLKRMEAKKIPARIDYSRIEGIATEAQQKLAKIQPETLAQAGRISGVNPADLSILAVYIEQGKIARVDD.

An FAD-binding site is contributed by 18–23 (GAGHAG). 281-295 (GPRYCPSIEDKIVRF) provides a ligand contact to NAD(+).

It belongs to the MnmG family. Homodimer. Heterotetramer of two MnmE and two MnmG subunits. It depends on FAD as a cofactor.

The protein resides in the cytoplasm. Functionally, NAD-binding protein involved in the addition of a carboxymethylaminomethyl (cmnm) group at the wobble position (U34) of certain tRNAs, forming tRNA-cmnm(5)s(2)U34. The sequence is that of tRNA uridine 5-carboxymethylaminomethyl modification enzyme MnmG from Ligilactobacillus salivarius (strain UCC118) (Lactobacillus salivarius).